A 113-amino-acid polypeptide reads, in one-letter code: Large ribosomal subunit protein bL17 (113 aa).

It belongs to the bacterial ribosomal protein bL17 family. Part of the 50S ribosomal subunit. Contacts protein L32.

The protein is Large ribosomal subunit protein bL17 of Natranaerobius thermophilus (strain ATCC BAA-1301 / DSM 18059 / JW/NM-WN-LF).